The following is an 83-amino-acid chain: Apolipoprotein C-I, basic form (83 aa).

Positions 1–26 (MRLFLSLPVLVVVLSMVLEGPAPVQG) are cleaved as a signal peptide.

This sequence belongs to the apolipoprotein C1 family.

Its subcellular location is the secreted. Functionally, inhibitor of lipoprotein binding to the low density lipoprotein (LDL) receptor, LDL receptor-related protein, and very low density lipoprotein (VLDL) receptor. Associates with high density lipoproteins (HDL) and the triacylglycerol-rich lipoproteins in the plasma and makes up about 10% of the protein of the VLDL and 2% of that of HDL. Appears to interfere directly with fatty acid uptake and is also the major plasma inhibitor of cholesteryl ester transfer protein (CETP). Binds free fatty acids and reduces their intracellular esterification. Modulates the interaction of APOE with beta-migrating VLDL and inhibits binding of beta-VLDL to the LDL receptor-related protein. The sequence is that of Apolipoprotein C-I, basic form (APOC1) from Papio anubis (Olive baboon).